Consider the following 343-residue polypeptide: Fructose-1,6-bisphosphatase, cytosolic (343 aa).

5 residues coordinate Mg(2+): glutamate 71, glutamate 100, aspartate 121, leucine 123, and aspartate 124. Residues 124–127, asparagine 215, tyrosine 247, tyrosine 267, and lysine 277 each bind substrate; that span reads DGSS. Glutamate 283 serves as a coordination point for Mg(2+).

The protein belongs to the FBPase class 1 family. Mg(2+) is required as a cofactor.

Its subcellular location is the cytoplasm. The catalysed reaction is beta-D-fructose 1,6-bisphosphate + H2O = beta-D-fructose 6-phosphate + phosphate. This Saccharum hybrid (Sugarcane) protein is Fructose-1,6-bisphosphatase, cytosolic (CFBP).